The primary structure comprises 524 residues: Indoleacetamide hydrolase (524 aa).

Basic residues-rich tracts occupy residues 1–26 (MAKK…KATA) and 34–54 (AAKK…RRPK). Residues 1–56 (MAKKTASKKKSVSRKVTKTSSKKATARKGAVAKAAKKSVKKAAPRKSATARRPKGP) are disordered. Active-site charge relay system residues include lysine 133 and serine 208. Serine 232 serves as the catalytic Acyl-ester intermediate.

Belongs to the amidase family.

Its pathway is plant hormone metabolism; auxin biosynthesis. Its function is as follows. Hydrolyzes indole-3-acetamide (IAM) into indole-3-acetic acid (IAA). In Bradyrhizobium diazoefficiens (strain JCM 10833 / BCRC 13528 / IAM 13628 / NBRC 14792 / USDA 110), this protein is Indoleacetamide hydrolase (bam).